The chain runs to 322 residues: MSVTDCFTQINSFTQINHFTETHRYVGRFAPSPSGDLHFGSLIAALGSYLQARSQQGRWLVRIEDIDPPREIPGAASRILAQLEHYGLYWDGDVVYQSQHHARYREILQQLQQQGMSYYCTCTRSRIQQLGGRYDGYCRTRNLSADNAAQRLRQTTPVFHFHDKLRGNLYADKTLAQEDFIIHRRDGLFAYNLAVVIDDNDQGITEIVRGADLIEPTVRQISLYQQLDYAIPTYVHLPLVLNTEGNKLSKQNHAPALPDSDPRPVLLAALQFLNQPLPENGQEMTLSALLAWSVAHWSLNIVPLQAAINTSTFTSAFSKGPW.

L-glutamate is bound by residues 28 to 32 (RFAPS) and glutamate 64. Positions 31–41 (PSPSGDLHFGS) match the 'HIGH' region motif. Residues cysteine 120, cysteine 122, tyrosine 134, and cysteine 138 each contribute to the Zn(2+) site. Positions 191 and 209 each coordinate L-glutamate. A 'KMSKS' region motif is present at residues 247-251 (KLSKQ). Lysine 250 is a binding site for ATP.

It belongs to the class-I aminoacyl-tRNA synthetase family. GluQ subfamily. It depends on Zn(2+) as a cofactor.

Its function is as follows. Catalyzes the tRNA-independent activation of glutamate in presence of ATP and the subsequent transfer of glutamate onto a tRNA(Asp). Glutamate is transferred on the 2-amino-5-(4,5-dihydroxy-2-cyclopenten-1-yl) moiety of the queuosine in the wobble position of the QUC anticodon. The chain is Glutamyl-Q tRNA(Asp) synthetase from Pectobacterium atrosepticum (strain SCRI 1043 / ATCC BAA-672) (Erwinia carotovora subsp. atroseptica).